The chain runs to 351 residues: Anthranilate phosphoribosyltransferase (351 aa).

Residues Gly80, 83-84 (GD), Thr88, 90-93 (NIST), 108-116 (KHGNRSVTS), and Ser120 contribute to the 5-phospho-alpha-D-ribose 1-diphosphate site. Gly80 is an anthranilate binding site. Residue Ser92 coordinates Mg(2+). Asn111 contacts anthranilate. An anthranilate-binding site is contributed by Arg166. The Mg(2+) site is built by Asp229 and Glu230.

This sequence belongs to the anthranilate phosphoribosyltransferase family. Homodimer. It depends on Mg(2+) as a cofactor.

It catalyses the reaction N-(5-phospho-beta-D-ribosyl)anthranilate + diphosphate = 5-phospho-alpha-D-ribose 1-diphosphate + anthranilate. It functions in the pathway amino-acid biosynthesis; L-tryptophan biosynthesis; L-tryptophan from chorismate: step 2/5. Catalyzes the transfer of the phosphoribosyl group of 5-phosphorylribose-1-pyrophosphate (PRPP) to anthranilate to yield N-(5'-phosphoribosyl)-anthranilate (PRA). The protein is Anthranilate phosphoribosyltransferase of Pelodictyon phaeoclathratiforme (strain DSM 5477 / BU-1).